The primary structure comprises 428 residues: Enolase 1 (428 aa).

A disordered region spans residues 38–58; sequence EVPSGASTGENEAVELRDGGS. Residue Q163 participates in (2R)-2-phosphoglycerate binding. The active-site Proton donor is E205. Residues D242, E286, and D313 each coordinate Mg(2+). Positions 338, 367, 368, and 389 each coordinate (2R)-2-phosphoglycerate. The active-site Proton acceptor is the K338.

The protein belongs to the enolase family. Requires Mg(2+) as cofactor.

It is found in the cytoplasm. It localises to the secreted. The protein localises to the cell surface. It carries out the reaction (2R)-2-phosphoglycerate = phosphoenolpyruvate + H2O. It participates in carbohydrate degradation; glycolysis; pyruvate from D-glyceraldehyde 3-phosphate: step 4/5. Functionally, catalyzes the reversible conversion of 2-phosphoglycerate (2-PG) into phosphoenolpyruvate (PEP). It is essential for the degradation of carbohydrates via glycolysis. This is Enolase 1 from Lactobacillus gasseri (strain ATCC 33323 / DSM 20243 / BCRC 14619 / CIP 102991 / JCM 1131 / KCTC 3163 / NCIMB 11718 / NCTC 13722 / AM63).